A 269-amino-acid chain; its full sequence is Phosphate import ATP-binding protein PstB 1 (269 aa).

One can recognise an ABC transporter domain in the interval 16–255 (FTTQNLDIYY…DRTGKVFGDP (240 aa)). 48-55 (GPSGCGKS) is an ATP binding site.

This sequence belongs to the ABC transporter superfamily. Phosphate importer (TC 3.A.1.7) family. As to quaternary structure, the complex is composed of two ATP-binding proteins (PstB), two transmembrane proteins (PstC and PstA) and a solute-binding protein (PstS).

Its subcellular location is the cell inner membrane. The enzyme catalyses phosphate(out) + ATP + H2O = ADP + 2 phosphate(in) + H(+). In terms of biological role, part of the ABC transporter complex PstSACB involved in phosphate import. Responsible for energy coupling to the transport system. This is Phosphate import ATP-binding protein PstB 1 from Synechocystis sp. (strain ATCC 27184 / PCC 6803 / Kazusa).